The chain runs to 294 residues: Nucleotide-binding protein Swol_0262 (294 aa).

Position 15-22 (15-22) interacts with ATP; the sequence is GLSGAGKT. Residue 65-68 coordinates GTP; sequence DVRG.

This sequence belongs to the RapZ-like family.

Its function is as follows. Displays ATPase and GTPase activities. In Syntrophomonas wolfei subsp. wolfei (strain DSM 2245B / Goettingen), this protein is Nucleotide-binding protein Swol_0262.